The chain runs to 634 residues: Kelch-like protein 22 (634 aa).

An N-acetylalanine modification is found at Ala-2. Residues 50 to 117 enclose the BTB domain; the sequence is FDVVLVVEGR…IYTSELELSL (68 aa). Kelch repeat units follow at residues 299–349, 350–399, 400–446, 448–493, 494–544, and 545–593; these read CVVG…VLNN, FVYL…VVGR, YIYA…TLEG, MYVT…TLLD, KLYV…VLDT, and RIYV…VLTL. Residue Thr-463 is modified to Phosphothreonine. At Tyr-466 the chain carries Phosphotyrosine. Residues 600–634 are disordered; it reads EPPRGTPDRSQADPDFASEVMSVSDWEEFDNSSED. A Phosphothreonine modification is found at Thr-605. A compositionally biased stretch (acidic residues) spans 624–634; the sequence is DWEEFDNSSED.

As to quaternary structure, component of the BCR(KLHL22) E3 ubiquitin ligase complex, at least composed of CUL3, KLHL22 and RBX1. Interacts with PLK1. Interacts with DEPDC5 (via DEP domain); the interaction depends on amino acid availability. Interacts with YWHAE; required for the nuclear localization of KLHL22 upon amino acid starvation.

The protein resides in the cytoplasm. The protein localises to the cytosol. Its subcellular location is the cytoskeleton. It localises to the microtubule organizing center. It is found in the centrosome. The protein resides in the spindle. The protein localises to the nucleus. Its subcellular location is the lysosome. It participates in protein modification; protein ubiquitination. Functionally, substrate-specific adapter of a BCR (BTB-CUL3-RBX1) E3 ubiquitin ligase complex required for chromosome alignment and localization of PLK1 at kinetochores. The BCR(KLHL22) ubiquitin ligase complex mediates monoubiquitination of PLK1, leading to PLK1 dissociation from phosphoreceptor proteins and subsequent removal from kinetochores, allowing silencing of the spindle assembly checkpoint (SAC) and chromosome segregation. Monoubiquitination of PLK1 does not lead to PLK1 degradation. The BCR(KLHL22) ubiquitin ligase complex is also responsible for the amino acid-stimulated 'Lys-48' polyubiquitination and proteasomal degradation of DEPDC5. Through the degradation of DEPDC5, releases the GATOR1 complex-mediated inhibition of the TORC1 pathway. It is therefore an amino acid-dependent activator within the amino acid-sensing branch of the TORC1 pathway, indirectly regulating different cellular processes including cell growth and autophagy. The polypeptide is Kelch-like protein 22 (KLHL22) (Ailuropoda melanoleuca (Giant panda)).